Consider the following 492-residue polypeptide: Aspartyl/glutamyl-tRNA(Asn/Gln) amidotransferase subunit B (492 aa).

This sequence belongs to the GatB/GatE family. GatB subfamily. As to quaternary structure, heterotrimer of A, B and C subunits.

The enzyme catalyses L-glutamyl-tRNA(Gln) + L-glutamine + ATP + H2O = L-glutaminyl-tRNA(Gln) + L-glutamate + ADP + phosphate + H(+). It carries out the reaction L-aspartyl-tRNA(Asn) + L-glutamine + ATP + H2O = L-asparaginyl-tRNA(Asn) + L-glutamate + ADP + phosphate + 2 H(+). Functionally, allows the formation of correctly charged Asn-tRNA(Asn) or Gln-tRNA(Gln) through the transamidation of misacylated Asp-tRNA(Asn) or Glu-tRNA(Gln) in organisms which lack either or both of asparaginyl-tRNA or glutaminyl-tRNA synthetases. The reaction takes place in the presence of glutamine and ATP through an activated phospho-Asp-tRNA(Asn) or phospho-Glu-tRNA(Gln). The protein is Aspartyl/glutamyl-tRNA(Asn/Gln) amidotransferase subunit B of Azorhizobium caulinodans (strain ATCC 43989 / DSM 5975 / JCM 20966 / LMG 6465 / NBRC 14845 / NCIMB 13405 / ORS 571).